Here is a 170-residue protein sequence, read N- to C-terminus: MGIPVVVPVAAAYSCSSSLAAPPRAAAAAARAPSRAHVAAAGMSSRASSFVGGSGGDLAAVAASVAARPRRAGSGGGGALGCKCLFGLGVPELAVIAGVAALVFGPKQLPEIGRSIGKTVKSFQQAAKEFETELKKEPGEGGDQPPPATPTAVSGGEEKGLEASSSKESA.

The N-terminal 61 residues, 1 to 61 (MGIPVVVPVA…GGSGGDLAAV (61 aa)), are a transit peptide targeting the chloroplast. At 62-84 (AASVAARPRRAGSGGGGALGCKC) the chain is on the lumenal side. Residues 85 to 105 (LFGLGVPELAVIAGVAALVFG) form a helical membrane-spanning segment. Over 106–170 (PKQLPEIGRS…LEASSSKESA (65 aa)) the chain is Stromal. The span at 130–139 (FETELKKEPG) shows a compositional bias: basic and acidic residues. The tract at residues 130–170 (FETELKKEPGEGGDQPPPATPTAVSGGEEKGLEASSSKESA) is disordered.

The protein belongs to the TatA/E family. In thylakoid membranes, TATC and TATB form a large receptor complex, containing about eight TATC-TATB pairs, which binds the precursor protein. Twin arginine signal peptide promotes pH-triggered docking of TATA oligomers to TATC-TATB receptor complex, inducing a conformational switch of TATA that results in activation of the translocase. TATA dissociates from TATC-TATB upon completion of translocation.

It localises to the plastid. It is found in the chloroplast thylakoid membrane. Its function is as follows. Part of the twin-arginine translocation (Tat) system that transports large folded proteins containing a characteristic twin-arginine motif in their signal peptide across the thylakoid membrane. Involved in delta pH-dependent protein transport required for chloroplast development, especially thylakoid membrane formation. TATC and TATB mediate precursor recognition, whereas TATA facilitates translocation. This chain is Sec-independent protein translocase protein TATA, chloroplastic, found in Zea mays (Maize).